A 339-amino-acid chain; its full sequence is Phosphoribosylformylglycinamidine cyclo-ligase (339 aa).

The protein belongs to the AIR synthase family.

It is found in the cytoplasm. The catalysed reaction is 2-formamido-N(1)-(5-O-phospho-beta-D-ribosyl)acetamidine + ATP = 5-amino-1-(5-phospho-beta-D-ribosyl)imidazole + ADP + phosphate + H(+). It functions in the pathway purine metabolism; IMP biosynthesis via de novo pathway; 5-amino-1-(5-phospho-D-ribosyl)imidazole from N(2)-formyl-N(1)-(5-phospho-D-ribosyl)glycinamide: step 2/2. This is Phosphoribosylformylglycinamidine cyclo-ligase from Oceanobacillus iheyensis (strain DSM 14371 / CIP 107618 / JCM 11309 / KCTC 3954 / HTE831).